A 421-amino-acid polypeptide reads, in one-letter code: Mannose-1-phosphate guanyltransferase alpha-A (421 aa).

Belongs to the transferase hexapeptide repeat family.

It catalyses the reaction alpha-D-mannose 1-phosphate + GTP + H(+) = GDP-alpha-D-mannose + diphosphate. Its pathway is nucleotide-sugar biosynthesis; GDP-alpha-D-mannose biosynthesis; GDP-alpha-D-mannose from alpha-D-mannose 1-phosphate (GTP route): step 1/1. In Xenopus laevis (African clawed frog), this protein is Mannose-1-phosphate guanyltransferase alpha-A (gmppa-a).